A 178-amino-acid polypeptide reads, in one-letter code: Cytidylate kinase 2 (178 aa).

7-15 (GKSGCGNTT) lines the ATP pocket.

It belongs to the cytidylate kinase family. Type 2 subfamily.

It is found in the cytoplasm. It catalyses the reaction CMP + ATP = CDP + ADP. The enzyme catalyses dCMP + ATP = dCDP + ADP. This is Cytidylate kinase 2 from Borreliella afzelii (strain PKo) (Borrelia afzelii).